A 146-amino-acid polypeptide reads, in one-letter code: Allograft inflammatory factor 1 (146 aa).

Serine 1 is modified (N-acetylserine). The residue at position 10 (lysine 10) is an N6-acetyllysine. Serine 38 bears the Phosphoserine mark. An EF-hand 1 domain is found at 44–79; the sequence is RKLEAFKQKYMEFDLNGNGDIDIMSLKRMLEKLGVP. Ca(2+) contacts are provided by aspartate 57, asparagine 59, asparagine 61, aspartate 63, and threonine 99. An EF-hand 2; degenerate domain is found at 81–115; the sequence is THLELKKLIKEVSSGSGETFSYSIFLKMMLGKRSA. A disordered region spans residues 127-146; that stretch reads AREQEKPTGPPAKKAISELP.

In terms of assembly, homodimer (Potential). Monomer. Interacts with LCP1. As to expression, microglial cells in the central nervous system and dendritic cells and macrophages in several organs.

It localises to the cytoplasm. The protein localises to the cytoskeleton. It is found in the cell projection. Its subcellular location is the ruffle membrane. The protein resides in the phagocytic cup. Functionally, actin-binding protein that enhances membrane ruffling and RAC activation. Enhances the actin-bundling activity of LCP1. Binds calcium. Plays a role in RAC signaling and in phagocytosis. May play a role in macrophage activation and function. Promotes the proliferation of vascular smooth muscle cells and of T-lymphocytes. Enhances lymphocyte migration. Plays a role in vascular inflammation. Has a dual influence on glucose-induced insulin secretion: inhibition at low concentration and stimulation at high concentrations. The chain is Allograft inflammatory factor 1 (AIF1) from Sus scrofa (Pig).